The primary structure comprises 910 residues: Inactive disease susceptibility protein LOV1 (910 aa).

Residues 22–60 (ARLNGIGEQVDGLKRQLGRLQSLLKDADAKKHESERVRN) are a coiled coil. The NB-ARC domain maps to 169–461 (EQSVEALAGH…AAEGIITSSD (293 aa)). 3 LRR repeats span residues 584 to 609 (LPLL…IGDL), 610 to 632 (IHLR…LRNL), and 634 to 655 (LLLY…LKEM).

Belongs to the disease resistance NB-LRR family. RPP8/HRT subfamily.

The sequence is that of Inactive disease susceptibility protein LOV1 (LOV1) from Arabidopsis thaliana (Mouse-ear cress).